The sequence spans 379 residues: Glutamate 5-kinase (379 aa).

K19 contributes to the ATP binding site. Positions 59, 146, and 158 each coordinate substrate. Residues 178–179 and 220–226 each bind ATP; these read TD and TGGMATK. In terms of domain architecture, PUA spans 285 to 363; the sequence is SGDIIIDDGA…KDIISILGHD (79 aa).

The protein belongs to the glutamate 5-kinase family.

Its subcellular location is the cytoplasm. The catalysed reaction is L-glutamate + ATP = L-glutamyl 5-phosphate + ADP. The protein operates within amino-acid biosynthesis; L-proline biosynthesis; L-glutamate 5-semialdehyde from L-glutamate: step 1/2. In terms of biological role, catalyzes the transfer of a phosphate group to glutamate to form L-glutamate 5-phosphate. In Vibrio parahaemolyticus serotype O3:K6 (strain RIMD 2210633), this protein is Glutamate 5-kinase.